A 372-amino-acid chain; its full sequence is Putative glutamate--cysteine ligase 2 (372 aa).

The protein belongs to the glutamate--cysteine ligase type 2 family. YbdK subfamily. As to quaternary structure, homodimer.

The enzyme catalyses L-cysteine + L-glutamate + ATP = gamma-L-glutamyl-L-cysteine + ADP + phosphate + H(+). Its function is as follows. ATP-dependent carboxylate-amine ligase which exhibits weak glutamate--cysteine ligase activity. In Escherichia coli O1:K1 / APEC, this protein is Putative glutamate--cysteine ligase 2 (ybdK).